The sequence spans 483 residues: Glutamyl-tRNA(Gln) amidotransferase subunit A (483 aa).

Active-site charge relay system residues include Lys-76 and Ser-151. Ser-175 serves as the catalytic Acyl-ester intermediate.

It belongs to the amidase family. GatA subfamily. Heterotrimer of A, B and C subunits.

The catalysed reaction is L-glutamyl-tRNA(Gln) + L-glutamine + ATP + H2O = L-glutaminyl-tRNA(Gln) + L-glutamate + ADP + phosphate + H(+). In terms of biological role, allows the formation of correctly charged Gln-tRNA(Gln) through the transamidation of misacylated Glu-tRNA(Gln) in organisms which lack glutaminyl-tRNA synthetase. The reaction takes place in the presence of glutamine and ATP through an activated gamma-phospho-Glu-tRNA(Gln). The sequence is that of Glutamyl-tRNA(Gln) amidotransferase subunit A from Pseudomonas putida (strain ATCC 700007 / DSM 6899 / JCM 31910 / BCRC 17059 / LMG 24140 / F1).